A 187-amino-acid chain; its full sequence is Potassium-transporting ATPase KdpC subunit (187 aa).

Residues 10–30 form a helical membrane-spanning segment; that stretch reads LVAATMLICVAGYSAAVWAVG.

Belongs to the KdpC family. The system is composed of three essential subunits: KdpA, KdpB and KdpC.

The protein resides in the cell inner membrane. Functionally, part of the high-affinity ATP-driven potassium transport (or Kdp) system, which catalyzes the hydrolysis of ATP coupled with the electrogenic transport of potassium into the cytoplasm. This subunit acts as a catalytic chaperone that increases the ATP-binding affinity of the ATP-hydrolyzing subunit KdpB by the formation of a transient KdpB/KdpC/ATP ternary complex. This is Potassium-transporting ATPase KdpC subunit from Parvibaculum lavamentivorans (strain DS-1 / DSM 13023 / NCIMB 13966).